Here is a 197-residue protein sequence, read N- to C-terminus: Putative RNA-binding protein EEED8.12 (197 aa).

One can recognise an RRM domain in the interval 61 to 138 (KSVFIGNVDF…RPIVVTAKRT (78 aa)). Positions 142–166 (GMGHGVRGSSRGTFGRGRGAARGAP) are disordered.

In Caenorhabditis elegans, this protein is Putative RNA-binding protein EEED8.12.